Consider the following 433-residue polypeptide: Gamma-glutamyl phosphate reductase (433 aa).

This sequence belongs to the gamma-glutamyl phosphate reductase family.

Its subcellular location is the cytoplasm. It carries out the reaction L-glutamate 5-semialdehyde + phosphate + NADP(+) = L-glutamyl 5-phosphate + NADPH + H(+). Its pathway is amino-acid biosynthesis; L-proline biosynthesis; L-glutamate 5-semialdehyde from L-glutamate: step 2/2. Catalyzes the NADPH-dependent reduction of L-glutamate 5-phosphate into L-glutamate 5-semialdehyde and phosphate. The product spontaneously undergoes cyclization to form 1-pyrroline-5-carboxylate. The protein is Gamma-glutamyl phosphate reductase of Rhodopseudomonas palustris (strain BisB18).